We begin with the raw amino-acid sequence, 152 residues long: Ribosome maturation factor RimP (152 aa).

This sequence belongs to the RimP family.

It localises to the cytoplasm. Required for maturation of 30S ribosomal subunits. This chain is Ribosome maturation factor RimP, found in Brevibacillus brevis (strain 47 / JCM 6285 / NBRC 100599).